The chain runs to 301 residues: MSNPELLSEEKAILVETLKNKLQALAEQHVDVLESLAPVVRKRVDVLIEIQSQHDELEAKFLEEKAALEANYQKLYGPLYSKRSEIVSGVLEVEGETEEREEKGVPDFWLKAMKNNEILAEEIHESDEEALKYLKDIKWCRIDDPKGFKFEFFFDTNPFFKNQVLTKTYHMIDEDDEPILEKAIGTEIEWHPGNCLTQEVLTKESSESTKPITKTEEYESFFNFFSPPQVPEDDAKIDENTAEELQNQMERDYDIASTLRDKIIPHVVSWFTGEAVQDEDYGASWVDDEEDDDDEYSDEEA.

Residues Val-15–Glu-69 adopt a coiled-coil conformation. A Nuclear export signal motif is present at residues Leu-36–Gln-51. The tract at residues Asp-278–Ala-301 is disordered.

Belongs to the nucleosome assembly protein (NAP) family.

Its subcellular location is the nucleus. It is found in the cytoplasm. May modulate chromatin structure by regulation of nucleosome assembly/disassembly. The sequence is that of Nucleosome assembly protein 1;3 (NAP1;3) from Oryza sativa subsp. japonica (Rice).